We begin with the raw amino-acid sequence, 545 residues long: Glucans biosynthesis protein G (545 aa).

An N-terminal signal peptide occupies residues 1–34 (MVSLLRCQSFKPSSSLICSLALSAAFALSSSAFA). Positions 38-60 (KPAENKPATPVVSPPKATAQPAN) are disordered.

This sequence belongs to the OpgD/OpgG family.

It is found in the periplasm. It participates in glycan metabolism; osmoregulated periplasmic glucan (OPG) biosynthesis. In terms of biological role, involved in the biosynthesis of osmoregulated periplasmic glucans (OPGs). The polypeptide is Glucans biosynthesis protein G (Shewanella sp. (strain MR-4)).